A 307-amino-acid chain; its full sequence is Pyridoxal 5'-phosphate synthase subunit PdxS (307 aa).

D37 provides a ligand contact to D-ribose 5-phosphate. The active-site Schiff-base intermediate with D-ribose 5-phosphate is K94. D-ribose 5-phosphate is bound at residue G166. R178 contributes to the D-glyceraldehyde 3-phosphate binding site. D-ribose 5-phosphate-binding positions include G227 and 248-249 (GS).

The protein belongs to the PdxS/SNZ family. In the presence of PdxT, forms a dodecamer of heterodimers.

It catalyses the reaction aldehydo-D-ribose 5-phosphate + D-glyceraldehyde 3-phosphate + L-glutamine = pyridoxal 5'-phosphate + L-glutamate + phosphate + 3 H2O + H(+). It participates in cofactor biosynthesis; pyridoxal 5'-phosphate biosynthesis. Its function is as follows. Catalyzes the formation of pyridoxal 5'-phosphate from ribose 5-phosphate (RBP), glyceraldehyde 3-phosphate (G3P) and ammonia. The ammonia is provided by the PdxT subunit. Can also use ribulose 5-phosphate and dihydroxyacetone phosphate as substrates, resulting from enzyme-catalyzed isomerization of RBP and G3P, respectively. This chain is Pyridoxal 5'-phosphate synthase subunit PdxS, found in Mycobacterium leprae (strain Br4923).